Here is a 490-residue protein sequence, read N- to C-terminus: GTPase Der (490 aa).

EngA-type G domains lie at 3 to 167 (FTLA…DAFE) and 203 to 378 (LQVA…EVWN). GTP is bound by residues 9–16 (GRPNVGKS), 56–60 (DTAGL), 119–122 (NKAE), 209–216 (GRPNAGKS), 256–260 (DTAGM), and 321–324 (NKWD). In terms of domain architecture, KH-like spans 379-465 (RRVPTAALNR…RLTMRSQSDA (87 aa)). A disordered region spans residues 451–490 (PGTPIRLTMRSQSDANPYKNRKKSTPSRLRKHLGKPSLKG). Positions 469-484 (KNRKKSTPSRLRKHLG) are enriched in basic residues.

The protein belongs to the TRAFAC class TrmE-Era-EngA-EngB-Septin-like GTPase superfamily. EngA (Der) GTPase family. In terms of assembly, associates with the 50S ribosomal subunit.

Its function is as follows. GTPase that plays an essential role in the late steps of ribosome biogenesis. This chain is GTPase Der, found in Dinoroseobacter shibae (strain DSM 16493 / NCIMB 14021 / DFL 12).